A 266-amino-acid chain; its full sequence is Isoprenyl transferase (266 aa).

The active site involves Asp-36. Asp-36 is a binding site for Mg(2+). Substrate is bound by residues 37–40 (GNGR), Trp-41, Arg-49, His-53, and 81–83 (STE). Residue Asn-84 is the Proton acceptor of the active site. Residues Trp-85, Arg-87, Arg-204, and 210 to 212 (RIS) each bind substrate. Glu-223 is a Mg(2+) binding site.

This sequence belongs to the UPP synthase family. In terms of assembly, homodimer. The cofactor is Mg(2+).

In terms of biological role, catalyzes the condensation of isopentenyl diphosphate (IPP) with allylic pyrophosphates generating different type of terpenoids. The chain is Isoprenyl transferase from Prochlorococcus marinus (strain SARG / CCMP1375 / SS120).